The following is a 1175-amino-acid chain: DNA-directed RNA polymerase subunit beta (1175 aa).

A disordered region spans residues 12 to 33 (QSKTDRPQSSSNGSSSLNGSVP). The segment covering 20–31 (SSSNGSSSLNGS) has biased composition (low complexity).

The protein belongs to the RNA polymerase beta chain family. The RNAP catalytic core consists of 2 alpha, 1 beta, 1 beta' and 1 omega subunit. When a sigma factor is associated with the core the holoenzyme is formed, which can initiate transcription.

The enzyme catalyses RNA(n) + a ribonucleoside 5'-triphosphate = RNA(n+1) + diphosphate. Its function is as follows. DNA-dependent RNA polymerase catalyzes the transcription of DNA into RNA using the four ribonucleoside triphosphates as substrates. The protein is DNA-directed RNA polymerase subunit beta of Mycobacterium avium (strain 104).